Reading from the N-terminus, the 342-residue chain is Holliday junction branch migration complex subunit RuvB (342 aa).

A large ATPase domain (RuvB-L) region spans residues Met-1–Tyr-179. Residues Ile-18, Arg-19, Gly-60, Lys-63, Thr-64, Thr-65, Glu-126–Phe-128, Arg-169, Tyr-179, and Arg-216 contribute to the ATP site. Residue Thr-64 participates in Mg(2+) binding. Positions Asn-180 to Thr-250 are small ATPAse domain (RuvB-S). Positions Ser-253–Glu-342 are head domain (RuvB-H). Positions 289, 308, and 313 each coordinate DNA.

It belongs to the RuvB family. Homohexamer. Forms an RuvA(8)-RuvB(12)-Holliday junction (HJ) complex. HJ DNA is sandwiched between 2 RuvA tetramers; dsDNA enters through RuvA and exits via RuvB. An RuvB hexamer assembles on each DNA strand where it exits the tetramer. Each RuvB hexamer is contacted by two RuvA subunits (via domain III) on 2 adjacent RuvB subunits; this complex drives branch migration. In the full resolvosome a probable DNA-RuvA(4)-RuvB(12)-RuvC(2) complex forms which resolves the HJ.

It localises to the cytoplasm. The enzyme catalyses ATP + H2O = ADP + phosphate + H(+). The RuvA-RuvB-RuvC complex processes Holliday junction (HJ) DNA during genetic recombination and DNA repair, while the RuvA-RuvB complex plays an important role in the rescue of blocked DNA replication forks via replication fork reversal (RFR). RuvA specifically binds to HJ cruciform DNA, conferring on it an open structure. The RuvB hexamer acts as an ATP-dependent pump, pulling dsDNA into and through the RuvAB complex. RuvB forms 2 homohexamers on either side of HJ DNA bound by 1 or 2 RuvA tetramers; 4 subunits per hexamer contact DNA at a time. Coordinated motions by a converter formed by DNA-disengaged RuvB subunits stimulates ATP hydrolysis and nucleotide exchange. Immobilization of the converter enables RuvB to convert the ATP-contained energy into a lever motion, pulling 2 nucleotides of DNA out of the RuvA tetramer per ATP hydrolyzed, thus driving DNA branch migration. The RuvB motors rotate together with the DNA substrate, which together with the progressing nucleotide cycle form the mechanistic basis for DNA recombination by continuous HJ branch migration. Branch migration allows RuvC to scan DNA until it finds its consensus sequence, where it cleaves and resolves cruciform DNA. This Rickettsia typhi (strain ATCC VR-144 / Wilmington) protein is Holliday junction branch migration complex subunit RuvB.